A 180-amino-acid polypeptide reads, in one-letter code: Zinc finger protein 740 (180 aa).

Positions 1–11 (MMLSQIASKQA) are enriched in polar residues. Residues 1–62 (MMLSQIASKQ…KEDDSLAEAS (62 aa)) form a disordered region. Lys-9 is covalently cross-linked (Glycyl lysine isopeptide (Lys-Gly) (interchain with G-Cter in SUMO2)). The residue at position 19 (Ser-19) is a Phosphoserine. The segment covering 31 to 56 (CKPRFDLSSKGHRKDSDKSRNRKEDD) has biased composition (basic and acidic residues). 2 C2H2-type zinc fingers span residues 88–110 (FICE…VLIH) and 116–138 (FECD…KRVH). Residues 144 to 166 (YQCERCHQCFSRTDRLLRHKRMC) form a C2H2-type 3; atypical zinc finger.

It belongs to the krueppel C2H2-type zinc-finger protein family.

The protein resides in the nucleus. Its function is as follows. May be involved in transcriptional regulation. The sequence is that of Zinc finger protein 740 (Znf740) from Mus musculus (Mouse).